Reading from the N-terminus, the 63-residue chain is Large ribosomal subunit protein uL29 (63 aa).

The protein belongs to the universal ribosomal protein uL29 family.

This is Large ribosomal subunit protein uL29 from Pelagibacter ubique (strain HTCC1062).